We begin with the raw amino-acid sequence, 292 residues long: Homoserine kinase (292 aa).

84–94 (PFSRGLGSSSA) serves as a coordination point for ATP.

The protein belongs to the GHMP kinase family. Homoserine kinase subfamily.

The protein localises to the cytoplasm. It carries out the reaction L-homoserine + ATP = O-phospho-L-homoserine + ADP + H(+). It participates in amino-acid biosynthesis; L-threonine biosynthesis; L-threonine from L-aspartate: step 4/5. Catalyzes the ATP-dependent phosphorylation of L-homoserine to L-homoserine phosphate. This chain is Homoserine kinase, found in Campylobacter hominis (strain ATCC BAA-381 / DSM 21671 / CCUG 45161 / LMG 19568 / NCTC 13146 / CH001A).